A 393-amino-acid chain; its full sequence is Endoglucanase 1 (393 aa).

An N-terminal signal peptide occupies residues 1–26; sequence MAFKLNIGLLALSLSLSLVHLDGVRA. The active-site Nucleophile is Asp34. Asp152 acts as the Proton donor in catalysis. Residues 233 to 393 are disordered; that stretch reads GCQRKDDNTI…GGHKKCHKKH (161 aa). Low complexity-rich tracts occupy residues 319–329 and 337–370; these read QGSSNGDATTG and DSGS…NPGA. Asn343 is a glycosylation site (N-linked (GlcNAc...) asparagine). Gly residues predominate over residues 371 to 384; that stretch reads AQGGQGGAQPGPSG.

Belongs to the glycosyl hydrolase 45 (cellulase K) family. In terms of processing, may also be O-glycosylated. As to expression, hyphal tip.

The protein localises to the secreted. It carries out the reaction Endohydrolysis of (1-&gt;4)-beta-D-glucosidic linkages in cellulose, lichenin and cereal beta-D-glucans.. This chain is Endoglucanase 1 (EGL1), found in Mycosarcoma maydis (Corn smut fungus).